The primary structure comprises 264 residues: Phosphonoacetaldehyde hydrolase (264 aa).

Residue Asp9 is the Nucleophile of the active site. Residues Asp9 and Ala11 each contribute to the Mg(2+) site. Lys50 (schiff-base intermediate with substrate) is an active-site residue. A Mg(2+)-binding site is contributed by Asp183.

It belongs to the HAD-like hydrolase superfamily. PhnX family. Homodimer. Mg(2+) serves as cofactor.

The enzyme catalyses phosphonoacetaldehyde + H2O = acetaldehyde + phosphate + H(+). Its function is as follows. Involved in phosphonate degradation. The protein is Phosphonoacetaldehyde hydrolase of Bacillus cytotoxicus (strain DSM 22905 / CIP 110041 / 391-98 / NVH 391-98).